The primary structure comprises 292 residues: MIRHLITTKDFTKDEIEDLFDDAQKFLNEPTPHLLKNKLIITIFFENSTRTRSSFEVAAKRLGAEVVSLDVSKSSTKKGETLFDTAANLNAMEPHAIVVRHKSAGVPYILSKYVSCSLINGGDGAHAHPTQALLDLFTLKQHFKAVEGKKIAIVGDIKNSRVANSNIELLQRFGMKVILVAPPHFLPKTDLPISYDLHAIINEVDAIMSLRTQTERHKYPIYASLRDYGNDFCITKDLIKDKDLIILHPGPVHRNIDISDEVLTDPRCKVLEQVKNGVAVRMAVLKKLIMHG.

Residues R50 and T51 each coordinate carbamoyl phosphate. K78 serves as a coordination point for L-aspartate. Carbamoyl phosphate contacts are provided by R100, H128, and Q131. R161 and R211 together coordinate L-aspartate. Carbamoyl phosphate-binding residues include G250 and P251.

Belongs to the aspartate/ornithine carbamoyltransferase superfamily. ATCase family. Heterododecamer (2C3:3R2) of six catalytic PyrB chains organized as two trimers (C3), and six regulatory PyrI chains organized as three dimers (R2).

It carries out the reaction carbamoyl phosphate + L-aspartate = N-carbamoyl-L-aspartate + phosphate + H(+). It participates in pyrimidine metabolism; UMP biosynthesis via de novo pathway; (S)-dihydroorotate from bicarbonate: step 2/3. Its function is as follows. Catalyzes the condensation of carbamoyl phosphate and aspartate to form carbamoyl aspartate and inorganic phosphate, the committed step in the de novo pyrimidine nucleotide biosynthesis pathway. The chain is Aspartate carbamoyltransferase catalytic subunit from Nitratiruptor sp. (strain SB155-2).